The primary structure comprises 96 residues: SPbeta prophage-derived uncharacterized protein YosV (96 aa).

The protein is SPbeta prophage-derived uncharacterized protein YosV (yosV) of Bacillus subtilis (strain 168).